We begin with the raw amino-acid sequence, 388 residues long: AdoMet-dependent heme synthase (388 aa).

Residues 1 to 12 are compositionally biased toward low complexity; sequence MHNANHPHGNGH. The interval 1 to 29 is disordered; the sequence is MHNANHPHGNGHPAEKKGMGAHSGAMNMP. Residues 34–257 enclose the Radical SAM core domain; sequence DGSPACRLIA…TSMHLKATCA (224 aa). Positions 50, 54, and 57 each coordinate [4Fe-4S] cluster.

Belongs to the radical SAM superfamily. The cofactor is [4Fe-4S] cluster.

The catalysed reaction is Fe-coproporphyrin III + 2 S-adenosyl-L-methionine = heme b + 2 5'-deoxyadenosine + 2 L-methionine + 2 CO2. The protein operates within porphyrin-containing compound metabolism; protoheme biosynthesis. Its function is as follows. Involved in siroheme-dependent heme b biosynthesis. Catalyzes the conversion of Fe-coproporphyrin III into heme by the oxidative decarboxylation of two propionate side chains. This chain is AdoMet-dependent heme synthase, found in Oleidesulfovibrio alaskensis (strain ATCC BAA-1058 / DSM 17464 / G20) (Desulfovibrio alaskensis).